A 270-amino-acid polypeptide reads, in one-letter code: Ribosomal RNA small subunit methyltransferase A (270 aa).

6 residues coordinate S-adenosyl-L-methionine: Asn16, Leu18, Gly43, Glu64, Asp89, and Asn110.

It belongs to the class I-like SAM-binding methyltransferase superfamily. rRNA adenine N(6)-methyltransferase family. RsmA subfamily.

The protein resides in the cytoplasm. It carries out the reaction adenosine(1518)/adenosine(1519) in 16S rRNA + 4 S-adenosyl-L-methionine = N(6)-dimethyladenosine(1518)/N(6)-dimethyladenosine(1519) in 16S rRNA + 4 S-adenosyl-L-homocysteine + 4 H(+). Specifically dimethylates two adjacent adenosines (A1518 and A1519) in the loop of a conserved hairpin near the 3'-end of 16S rRNA in the 30S particle. May play a critical role in biogenesis of 30S subunits. This is Ribosomal RNA small subunit methyltransferase A from Pseudomonas fluorescens (strain ATCC BAA-477 / NRRL B-23932 / Pf-5).